Reading from the N-terminus, the 179-residue chain is Large ribosomal subunit protein uL5 (179 aa).

Belongs to the universal ribosomal protein uL5 family. Part of the 50S ribosomal subunit; part of the 5S rRNA/L5/L18/L25 subcomplex. Contacts the 5S rRNA and the P site tRNA. Forms a bridge to the 30S subunit in the 70S ribosome.

This is one of the proteins that bind and probably mediate the attachment of the 5S RNA into the large ribosomal subunit, where it forms part of the central protuberance. In the 70S ribosome it contacts protein S13 of the 30S subunit (bridge B1b), connecting the 2 subunits; this bridge is implicated in subunit movement. Contacts the P site tRNA; the 5S rRNA and some of its associated proteins might help stabilize positioning of ribosome-bound tRNAs. The polypeptide is Large ribosomal subunit protein uL5 (Alkalilimnicola ehrlichii (strain ATCC BAA-1101 / DSM 17681 / MLHE-1)).